The primary structure comprises 423 residues: Myb-like protein G (423 aa).

The 55-residue stretch at 36-90 folds into the HTH myb-type domain; it reads TISKQRENWTDEEHQKFLEALTLFDRDWKKIESFVGSKTVIQIRSHAQKYFIKVQ. The H-T-H motif DNA-binding region spans 63-86; sequence WKKIESFVGSKTVIQIRSHAQKYF. Disordered regions lie at residues 93 to 116, 177 to 205, and 284 to 372; these read NTGERIPPPRPKRKSIQPYPQKQK, QQAVTTAQSSQRNGGLPPNPSSNNGGTTL, and ISPR…LGNY. Low complexity predominate over residues 177–202; the sequence is QQAVTTAQSSQRNGGLPPNPSSNNGG. Positions 286–295 are enriched in polar residues; that stretch reads PRNSTGNINV. The span at 302–354 shows a compositional bias: low complexity; it reads NNSNNNNNNNNNNNNNNNNNNNNNNNNNNNNNNNNNNNNNNNNNNNNNNNNNN. A compositionally biased stretch (polar residues) spans 361–372; the sequence is QNHSNMVNLGNY.

It is found in the nucleus. This is Myb-like protein G (mybG) from Dictyostelium discoideum (Social amoeba).